An 82-amino-acid polypeptide reads, in one-letter code: MPKRVLQGVVVSDKTDKTVVVRVERRFTHPLLKKTVRRSKKYHAHDEANAWKVGDTVWIEEHRPISKLKNWIVIQGEKRAEV.

Belongs to the universal ribosomal protein uS17 family. Part of the 30S ribosomal subunit.

One of the primary rRNA binding proteins, it binds specifically to the 5'-end of 16S ribosomal RNA. The protein is Small ribosomal subunit protein uS17 of Xanthobacter autotrophicus (strain ATCC BAA-1158 / Py2).